We begin with the raw amino-acid sequence, 229 residues long: Large ribosomal subunit protein uL1 (229 aa).

It belongs to the universal ribosomal protein uL1 family. As to quaternary structure, part of the 50S ribosomal subunit.

Functionally, binds directly to 23S rRNA. The L1 stalk is quite mobile in the ribosome, and is involved in E site tRNA release. Its function is as follows. Protein L1 is also a translational repressor protein, it controls the translation of the L11 operon by binding to its mRNA. In Streptococcus equi subsp. zooepidemicus (strain MGCS10565), this protein is Large ribosomal subunit protein uL1.